A 769-amino-acid chain; its full sequence is Portal protein (769 aa).

The tract at residues 458-479 is putative leucine zipper motif; the sequence is LEGYVNNLFKTIEGLKDVNSDL. Disordered regions lie at residues 654-675 and 750-769; these read RGPRRTPSPSWGLPDPTEDDER and RQLTNTSRRGVGCERRDRRS. A compositionally biased stretch (basic and acidic residues) spans 760 to 769; it reads VGCERRDRRS.

The protein belongs to the herpesviridae portal protein family. Homododecamerizes. Interacts with terminase subunits TRM1 and TRM3.

It localises to the virion. It is found in the host nucleus. Its function is as follows. Forms a portal in the viral capsid through which viral DNA is translocated during DNA packaging. Assembles as a dodecamer at a single fivefold axe of the T=16 icosahedric capsid. Binds to the molecular motor that translocates the viral DNA, termed terminase. The sequence is that of Portal protein (54) from Homo sapiens (Human).